The primary structure comprises 1072 residues: DNA-directed RNA polymerase subunit beta (1072 aa).

This sequence belongs to the RNA polymerase beta chain family. As to quaternary structure, in plastids the minimal PEP RNA polymerase catalytic core is composed of four subunits: alpha, beta, beta', and beta''. When a (nuclear-encoded) sigma factor is associated with the core the holoenzyme is formed, which can initiate transcription.

The protein resides in the plastid. It is found in the chloroplast. The catalysed reaction is RNA(n) + a ribonucleoside 5'-triphosphate = RNA(n+1) + diphosphate. DNA-dependent RNA polymerase catalyzes the transcription of DNA into RNA using the four ribonucleoside triphosphates as substrates. In Capsella bursa-pastoris (Shepherd's purse), this protein is DNA-directed RNA polymerase subunit beta.